Consider the following 257-residue polypeptide: Ribonuclease HII (257 aa).

An RNase H type-2 domain is found at 71-257 (SLIAGIDEVG…TSFEPIKSML (187 aa)). Residues Asp-77, Glu-78, and Asp-172 each coordinate a divalent metal cation.

This sequence belongs to the RNase HII family. Requires Mn(2+) as cofactor. Mg(2+) serves as cofactor.

Its subcellular location is the cytoplasm. The catalysed reaction is Endonucleolytic cleavage to 5'-phosphomonoester.. Its function is as follows. Endonuclease that specifically degrades the RNA of RNA-DNA hybrids. The protein is Ribonuclease HII of Streptococcus uberis (strain ATCC BAA-854 / 0140J).